The following is a 132-amino-acid chain: CLAVATA3/ESR (CLE)-related protein ESR2 (132 aa).

The signal sequence occupies residues 1–26 (MASRMGMVAIVSLFVCALVASTSVNA). The segment at 68 to 132 (NRASKQLDSE…IGPPPFLDRY (65 aa)) is disordered. Hydroxyproline is present on residues P82 and P85. O-linked (Ara...) hydroxyproline glycosylation is present at P85. Residues 123 to 132 (IGPPPFLDRY) show a composition bias toward pro residues.

The protein belongs to the CLV3/ESR signal peptide family. The O-glycosylation (arabinosylation) of the hydroxyproline Pro-85 enhances binding affinity of the ESR2p peptide for its receptor. Seed endosperm.

The protein resides in the secreted. The protein localises to the extracellular space. Extracellular signal peptide that regulates cell fate. The sequence is that of CLAVATA3/ESR (CLE)-related protein ESR2 from Zea mays (Maize).